Consider the following 161-residue polypeptide: MRIAIYPGSFDPVTYAHLDIARRATRIFDRVIMAVFDRPQKRLLFSTAERLQLLQAVTADLVNVEATSYEMLTVEFARQVGACAIVRGLRAGSDFEAEFQMAQVNQTIDPNIEVVVLMAGRQFAHISSTAVREMASLGRDPVEFTPPVVVAALREKFAQRG.

Serine 9 contacts substrate. ATP-binding positions include 9 to 10 and histidine 17; that span reads SF. Residues lysine 41, threonine 73, and arginine 87 each coordinate substrate. Residues 88–90, glutamate 98, and 123–129 contribute to the ATP site; these read GLR and FAHISST.

It belongs to the bacterial CoaD family. As to quaternary structure, homohexamer. Mg(2+) serves as cofactor.

It localises to the cytoplasm. It carries out the reaction (R)-4'-phosphopantetheine + ATP + H(+) = 3'-dephospho-CoA + diphosphate. The protein operates within cofactor biosynthesis; coenzyme A biosynthesis; CoA from (R)-pantothenate: step 4/5. In terms of biological role, reversibly transfers an adenylyl group from ATP to 4'-phosphopantetheine, yielding dephospho-CoA (dPCoA) and pyrophosphate. The polypeptide is Phosphopantetheine adenylyltransferase (Chloroflexus aurantiacus (strain ATCC 29366 / DSM 635 / J-10-fl)).